We begin with the raw amino-acid sequence, 434 residues long: Tryptamine hydroxycinnamoyltransferase 2 (434 aa).

Residues H154 and D380 each act as proton acceptor in the active site.

Belongs to the plant acyltransferase family.

Functionally, hydroxycinnamoyl transferase that catalyzes the transfer of an acyl from p-coumaryol-CoA to tryptamine, to produce coumaroyl tryptamine. Serotonin and tyramine serve as acyl acceptors in vitro. Can use caffeoyl-CoA, and to a lesser extent feruloyl-CoA, as acyl donors. In Oryza sativa subsp. japonica (Rice), this protein is Tryptamine hydroxycinnamoyltransferase 2.